We begin with the raw amino-acid sequence, 189 residues long: MTKLENPVLMATIGGAQGLRGEVRAKAYTADPSALGDYGHLHSMDGRSFEVLEIRETKNVVIVRFRGVNDRNAAEALNGLELYIERDNLPDEELEDDEFYYADLEGLEARDDKGASYGTVTGVFDFGAGDLLELKGPGKRPVLIPFSEASVLEIDLEAGTLLIDPLAAGLVDDPEELSKFTADKPKKKK.

The 83-residue stretch at 95 to 177 (EDDEFYYADL…AGLVDDPEEL (83 aa)) folds into the PRC barrel domain.

The protein belongs to the RimM family. As to quaternary structure, binds ribosomal protein uS19.

The protein localises to the cytoplasm. An accessory protein needed during the final step in the assembly of 30S ribosomal subunit, possibly for assembly of the head region. Essential for efficient processing of 16S rRNA. May be needed both before and after RbfA during the maturation of 16S rRNA. It has affinity for free ribosomal 30S subunits but not for 70S ribosomes. The sequence is that of Ribosome maturation factor RimM from Rhizobium leguminosarum bv. trifolii (strain WSM2304).